The following is a 233-amino-acid chain: NAD(P)H-hydrate epimerase (233 aa).

Residues 10-217 (AINVDLELFN…ALQRKYELNL (208 aa)) enclose the YjeF N-terminal domain. 60–64 (NNGGD) serves as a coordination point for (6S)-NADPHX. K(+) is bound by residues Asn61 and Asp125. (6S)-NADPHX is bound by residues 129–135 (GFSFKPP) and Asp158. Position 161 (Ser161) interacts with K(+).

This sequence belongs to the NnrE/AIBP family. K(+) serves as cofactor.

The enzyme catalyses (6R)-NADHX = (6S)-NADHX. The catalysed reaction is (6R)-NADPHX = (6S)-NADPHX. Functionally, catalyzes the epimerization of the S- and R-forms of NAD(P)HX, a damaged form of NAD(P)H that is a result of enzymatic or heat-dependent hydration. This is a prerequisite for the S-specific NAD(P)H-hydrate dehydratase to allow the repair of both epimers of NAD(P)HX. The polypeptide is NAD(P)H-hydrate epimerase (Drosophila grimshawi (Hawaiian fruit fly)).